The sequence spans 370 residues: Protein commissureless 1 (370 aa).

The Extracellular segment spans residues 1-136 (MISTTDYPTV…DADMHVIINY (136 aa)). Residues 108–131 (LRDRSEESGESSWWSQIFGDADMH) are required for vesicular localization. Residues 137-157 (LWIGVVSSLVILSLVFILFSC) traverse the membrane as a helical segment. The Cytoplasmic segment spans residues 158–370 (YFYRKFRTWK…CASLVVVVAA (213 aa)). Short sequence motifs (PY-motif) lie at residues 220–223 (PPCY) and 229–232 (LPSY). The segment at 227–237 (TGLPSYDEALH) is interaction with Nedd4. A disordered region spans residues 287–312 (VEEDKADSSSSTSASASPSSSESSNL). Low complexity predominate over residues 294-312 (SSSSTSASASPSSSESSNL).

This sequence belongs to the commissureless family. In terms of assembly, interacts (probably via PY-motifs) with Nedd4 (via WW2 domain). Interacts with Robo. In terms of processing, ubiquitinated by Nedd4; which promotes endocytosis of the comm/robo complex and comm proteasomal degradation. Not ubiquitinated by Nedd4.

Its subcellular location is the cytoplasmic vesicle membrane. The protein localises to the cell membrane. Controls axon guidance across the CNS midline by preventing the delivery of Robo to the growth cone. This is Protein commissureless 1 from Drosophila melanogaster (Fruit fly).